Reading from the N-terminus, the 691-residue chain is Calcium-binding and coiled-coil domain-containing protein 1 (691 aa).

The tract at residues 1-30 is p300 KIX-binding; that stretch reads MEESSLSRAPSRGGVNFLNVARTYIPNTKV. Positions 1–190 are N-terminal AD (CTNNB1 binding site); that stretch reads MEESSLSRAP…VQELEAALAT (190 aa). Residue Ser-4 is modified to Phosphoserine. Residues 45 to 125 form an interaction with GATA1 region; the sequence is SDWIGIFKVE…FQFREPRPMD (81 aa). 3 coiled-coil regions span residues 145–205, 232–339, and 417–514; these read KATV…YKGL, ELED…AELE, and QSME…ADEK. The C-terminal AD (CTNNB1 binding site); interaction with CCAR1 stretch occupies residues 501–691; sequence RKLEARLEKV…FSTQDPFTFE (191 aa). The segment at 512–605 is disordered; the sequence is DEKWTEDAAT…DSEAEDEKSV (94 aa). Residues 653 to 679 form a UBZ1-type zinc finger; that stretch reads WKECPICKERFPAESDKDALEGHMDGH. Zn(2+)-binding residues include Cys-656, Cys-659, His-675, and His-679.

The protein belongs to the CALCOCO family. Part of a calphoglin complex consisting of CALCOCO1, PPA1 and PGM. Interacts with the bHLH-PAS domains of GRIP1, AHR and ARNT. Interacts with CTNNB1 via both its N- and C-terminal regions. Interacts with EP300. Interacts with CCAR1 (via N-terminus) and GATA1. In terms of tissue distribution, expressed in all tissues examined except spleen, with high levels of expression in the heart and kidney.

Its subcellular location is the cytoplasm. The protein localises to the nucleus. In terms of biological role, functions as a coactivator for aryl hydrocarbon and nuclear receptors (NR). Recruited to promoters through its contact with the N-terminal basic helix-loop-helix-Per-Arnt-Sim (PAS) domain of transcription factors or coactivators, such as NCOA2. During ER-activation acts synergistically in combination with other NCOA2-binding proteins, such as EP300, CREBBP and CARM1. Involved in the transcriptional activation of target genes in the Wnt/CTNNB1 pathway. Functions as a secondary coactivator in LEF1-mediated transcriptional activation via its interaction with CTNNB1. Coactivator function for nuclear receptors and LEF1/CTNNB1 involves differential utilization of two different activation regions. In association with CCAR1 enhances GATA1- and MED1-mediated transcriptional activation from the gamma-globin promoter during erythroid differentiation of K562 erythroleukemia cells. The polypeptide is Calcium-binding and coiled-coil domain-containing protein 1 (Calcoco1) (Mus musculus (Mouse)).